The primary structure comprises 303 residues: Coenzyme PQQ synthesis protein B (303 aa).

Belongs to the PqqB family.

It participates in cofactor biosynthesis; pyrroloquinoline quinone biosynthesis. Functionally, may be involved in the transport of PQQ or its precursor to the periplasm. The polypeptide is Coenzyme PQQ synthesis protein B (Acinetobacter baumannii (strain AYE)).